Here is a 298-residue protein sequence, read N- to C-terminus: Cytosolic Fe-S cluster assembly factor CFD1 (298 aa).

ATP is bound at residue 25–32 (GKGGVGKS). [4Fe-4S] cluster is bound by residues Cys-215 and Cys-218.

It belongs to the Mrp/NBP35 ATP-binding proteins family. NUBP2/CFD1 subfamily. Heterotetramer of 2 NBP35 and 2 CFD1 chains. It depends on [4Fe-4S] cluster as a cofactor.

The protein localises to the cytoplasm. Component of the cytosolic iron-sulfur (Fe/S) protein assembly (CIA) machinery. Required for maturation of extramitochondrial Fe-S proteins. The NBP35-CFD1 heterotetramer forms a Fe-S scaffold complex, mediating the de novo assembly of an Fe-S cluster and its transfer to target apoproteins. Required for biogenesis and export of both ribosomal subunits, which may reflect a role in assembly of the Fe/S clusters in RLI1, a protein which performs rRNA processing and ribosome export. The protein is Cytosolic Fe-S cluster assembly factor CFD1 of Debaryomyces hansenii (strain ATCC 36239 / CBS 767 / BCRC 21394 / JCM 1990 / NBRC 0083 / IGC 2968) (Yeast).